Reading from the N-terminus, the 309-residue chain is Mannitol-1-phosphatase (309 aa).

H82 serves as the catalytic Tele-phosphohistidine intermediate. E166 serves as the catalytic Proton donor/acceptor.

Belongs to the phosphoglycerate mutase family.

It carries out the reaction D-mannitol 1-phosphate + H2O = D-mannitol + phosphate. With respect to regulation, by diethyl pyrocarbonate (DEPC). In terms of biological role, key enzyme for mannitol biosynthesis. The chain is Mannitol-1-phosphatase from Eimeria tenella (Coccidian parasite).